The chain runs to 267 residues: B3 domain-containing protein Os02g0455800 (267 aa).

Positions 30–131 (EKFLMPSDLC…RLFICCRLGT (102 aa)) form a DNA-binding region, TF-B3. The tract at residues 172-221 (QARLHDGNQDGGGAPSRHVPSSGRRVEAQLSRVSSRRQRRTMKHSIPEPT) is disordered. A compositionally biased stretch (basic residues) spans 205–214 (SSRRQRRTMK).

The protein resides in the nucleus. In Oryza sativa subsp. japonica (Rice), this protein is B3 domain-containing protein Os02g0455800.